The chain runs to 803 residues: Translation initiation factor IF-2 (803 aa).

A compositionally biased stretch (basic and acidic residues) spans 65–75; it reads PDKVEEKKEHT. The interval 65–186 is disordered; the sequence is PDKVEEKKEH…PKSRKSKTLK (122 aa). A compositionally biased stretch (basic residues) spans 175–185; it reads NKPKSRKSKTL. In terms of domain architecture, tr-type G spans 300-468; that stretch reads IRPPVVTIMG…ILLTADAALE (169 aa). The segment at 309 to 316 is G1; the sequence is GHVDHGKT. Residue 309-316 participates in GTP binding; sequence GHVDHGKT. The tract at residues 334–338 is G2; that stretch reads GITQH. A G3 region spans residues 355–358; the sequence is DTPG. Residues 355–359 and 409–412 each bind GTP; these read DTPGH and NKID. The tract at residues 409–412 is G4; the sequence is NKID. Residues 445-447 form a G5 region; it reads SAK.

Belongs to the TRAFAC class translation factor GTPase superfamily. Classic translation factor GTPase family. IF-2 subfamily.

The protein localises to the cytoplasm. One of the essential components for the initiation of protein synthesis. Protects formylmethionyl-tRNA from spontaneous hydrolysis and promotes its binding to the 30S ribosomal subunits. Also involved in the hydrolysis of GTP during the formation of the 70S ribosomal complex. The sequence is that of Translation initiation factor IF-2 from Tropheryma whipplei (strain TW08/27) (Whipple's bacillus).